A 559-amino-acid polypeptide reads, in one-letter code: Thermosome subunit alpha (559 aa).

Residues 536-552 show a composition bias toward basic and acidic residues; that stretch reads SGEKKGEKKEGGEEEKS. The disordered stretch occupies residues 536-559; it reads SGEKKGEKKEGGEEEKSSTPSSLE.

It belongs to the TCP-1 chaperonin family. Forms a Heterooligomeric complex of two stacked nine-membered rings; one of alpha and the other of beta subunits.

Molecular chaperone; binds unfolded polypeptides in vitro, and has a weak ATPase activity. The sequence is that of Thermosome subunit alpha (thsA) from Sulfurisphaera tokodaii (strain DSM 16993 / JCM 10545 / NBRC 100140 / 7) (Sulfolobus tokodaii).